Here is an 81-residue protein sequence, read N- to C-terminus: Neurotoxin LmNaTx11.1 (81 aa).

Residues 1-18 form the signal peptide; sequence MKIVIIFFIAMMAVGVYS. Positions 19 to 80 constitute an LCN-type CS-alpha/beta domain; that stretch reads KDGYLVKKNG…PTYPSSKTCS (62 aa). Disulfide bonds link cysteine 29–cysteine 79, cysteine 33–cysteine 56, cysteine 42–cysteine 61, and cysteine 46–cysteine 63.

The protein belongs to the long (4 C-C) scorpion toxin superfamily. Sodium channel inhibitor family. Beta subfamily. In terms of tissue distribution, expressed by the venom gland.

The protein resides in the secreted. Functionally, binds voltage-independently at site-4 of sodium channels (Nav) and shift the voltage of activation toward more negative potentials thereby affecting sodium channel activation and promoting spontaneous and repetitive firing. This is Neurotoxin LmNaTx11.1 from Lychas mucronatus (Chinese swimming scorpion).